Reading from the N-terminus, the 404-residue chain is Lysophospholipid transporter LplT (404 aa).

12 consecutive transmembrane segments (helical) span residues 16–36, 53–73, 91–111, 139–159, 164–184, 195–213, 227–247, 253–273, 285–305, 310–330, 350–370, and 372–392; these read MIAV…LLFA, ILQM…GQFA, AGAL…LVGV, MMEA…GVLA, GVAL…NMFI, SWRP…LVLW, LFWG…PIAL, ATPT…AGAA, CLPA…QHSM, LLLI…NALL, GENT…KLGV, and VIAV…LLWG.

It belongs to the major facilitator superfamily. LplT (TC 2.A.1.42) family.

Its subcellular location is the cell inner membrane. Catalyzes the facilitated diffusion of 2-acyl-glycero-3-phosphoethanolamine (2-acyl-GPE) into the cell. This Yersinia enterocolitica serotype O:8 / biotype 1B (strain NCTC 13174 / 8081) protein is Lysophospholipid transporter LplT.